Reading from the N-terminus, the 370-residue chain is Dual-specificity RNA methyltransferase RlmN (370 aa).

Catalysis depends on E93, which acts as the Proton acceptor. The region spanning 99–337 (EEGRGTLCVS…VTTVRKTRGD (239 aa)) is the Radical SAM core domain. A disulfide bridge connects residues C106 and C343. Residues C113, C117, and C120 each contribute to the [4Fe-4S] cluster site. S-adenosyl-L-methionine-binding positions include 167 to 168 (GE), S199, 221 to 223 (SLH), and N300. C343 acts as the S-methylcysteine intermediate in catalysis.

Belongs to the radical SAM superfamily. RlmN family. It depends on [4Fe-4S] cluster as a cofactor.

The protein localises to the cytoplasm. The catalysed reaction is adenosine(2503) in 23S rRNA + 2 reduced [2Fe-2S]-[ferredoxin] + 2 S-adenosyl-L-methionine = 2-methyladenosine(2503) in 23S rRNA + 5'-deoxyadenosine + L-methionine + 2 oxidized [2Fe-2S]-[ferredoxin] + S-adenosyl-L-homocysteine. It carries out the reaction adenosine(37) in tRNA + 2 reduced [2Fe-2S]-[ferredoxin] + 2 S-adenosyl-L-methionine = 2-methyladenosine(37) in tRNA + 5'-deoxyadenosine + L-methionine + 2 oxidized [2Fe-2S]-[ferredoxin] + S-adenosyl-L-homocysteine. In terms of biological role, specifically methylates position 2 of adenine 2503 in 23S rRNA and position 2 of adenine 37 in tRNAs. m2A2503 modification seems to play a crucial role in the proofreading step occurring at the peptidyl transferase center and thus would serve to optimize ribosomal fidelity. The polypeptide is Dual-specificity RNA methyltransferase RlmN (Francisella tularensis subsp. tularensis (strain WY96-3418)).